Consider the following 285-residue polypeptide: Bifunctional protein FolD (285 aa).

Residues 164 to 166, Ser193, and Ile234 each bind NADP(+); that span reads GRS.

It belongs to the tetrahydrofolate dehydrogenase/cyclohydrolase family. As to quaternary structure, homodimer.

It catalyses the reaction (6R)-5,10-methylene-5,6,7,8-tetrahydrofolate + NADP(+) = (6R)-5,10-methenyltetrahydrofolate + NADPH. The enzyme catalyses (6R)-5,10-methenyltetrahydrofolate + H2O = (6R)-10-formyltetrahydrofolate + H(+). Its pathway is one-carbon metabolism; tetrahydrofolate interconversion. Its function is as follows. Catalyzes the oxidation of 5,10-methylenetetrahydrofolate to 5,10-methenyltetrahydrofolate and then the hydrolysis of 5,10-methenyltetrahydrofolate to 10-formyltetrahydrofolate. The protein is Bifunctional protein FolD of Desulfovibrio desulfuricans (strain ATCC 27774 / DSM 6949 / MB).